The primary structure comprises 305 residues: Transmembrane protein 74 (305 aa).

2 disordered regions span residues 52-88 and 123-143; these read ATEM…LLHS and RNRS…GWEN. The span at 58–78 shows a compositional bias: low complexity; it reads SKLSSSPASPSSSLQNSTLQP. 2 helical membrane-spanning segments follow: residues 178–198 and 232–252; these read FISA…SYIV and VIAG…LLMM.

This sequence belongs to the TMEM74 family. Expressed in heart, lung, and placenta.

It localises to the lysosome membrane. The protein resides in the cytoplasmic vesicle. The protein localises to the autophagosome membrane. Functionally, plays an essential role in autophagy. TMEM74-induced autophagy may involve PI3K signal transduction. This Homo sapiens (Human) protein is Transmembrane protein 74 (TMEM74).